Here is an 84-residue protein sequence, read N- to C-terminus: Putative membrane protein insertion efficiency factor (84 aa).

The disordered stretch occupies residues 61–84; the sequence is SQGFEDPLPPNTKRTNLTHGRQTK. The span at 72 to 84 shows a compositional bias: polar residues; sequence TKRTNLTHGRQTK.

This sequence belongs to the UPF0161 family.

It is found in the cell inner membrane. Its function is as follows. Could be involved in insertion of integral membrane proteins into the membrane. This Leptospira borgpetersenii serovar Hardjo-bovis (strain JB197) protein is Putative membrane protein insertion efficiency factor.